Reading from the N-terminus, the 290-residue chain is Oxaloacetate decarboxylase (290 aa).

A substrate-binding site is contributed by serine 53. Position 91 (aspartate 91) interacts with Mg(2+). Residues arginine 162 and histidine 238 each coordinate substrate.

The protein belongs to the isocitrate lyase/PEP mutase superfamily. Oxaloacetate decarboxylase family. Homotetramer; dimer of dimers. Requires Mg(2+) as cofactor.

The catalysed reaction is oxaloacetate + H(+) = pyruvate + CO2. Catalyzes the decarboxylation of oxaloacetate into pyruvate. Seems to play a role in maintaining cellular concentrations of bicarbonate and pyruvate. This chain is Oxaloacetate decarboxylase, found in Ectopseudomonas mendocina (strain ymp) (Pseudomonas mendocina).